Consider the following 263-residue polypeptide: Undecaprenyl-diphosphatase 2 (263 aa).

8 helical membrane-spanning segments follow: residues 15-37, 42-62, 79-99, 107-127, 142-162, 183-203, 216-236, and 242-262; these read GLTEFLPVSSTGHMILTGHLIGF, AKVFEVVIQLGSILAVVVIFW, SLNLLHIIIGMIPAGVLGVLF, LFGPGPVVISLVAGGILMIVA, ITYKQAFTIGMFQCLALWPGF, AEYTFILAVPMMVAASGLDLI, LFVTGFVTAFVVAMLAIVSFL, and VKLTPFAYYRFILAAVFYFFI.

The protein belongs to the UppP family.

The protein localises to the cell membrane. The catalysed reaction is di-trans,octa-cis-undecaprenyl diphosphate + H2O = di-trans,octa-cis-undecaprenyl phosphate + phosphate + H(+). In terms of biological role, catalyzes the dephosphorylation of undecaprenyl diphosphate (UPP). Confers resistance to bacitracin. This Bacillus cereus (strain ATCC 14579 / DSM 31 / CCUG 7414 / JCM 2152 / NBRC 15305 / NCIMB 9373 / NCTC 2599 / NRRL B-3711) protein is Undecaprenyl-diphosphatase 2.